Reading from the N-terminus, the 188-residue chain is UPF0301 protein PD_1276 (188 aa).

Belongs to the UPF0301 (AlgH) family.

This chain is UPF0301 protein PD_1276, found in Xylella fastidiosa (strain Temecula1 / ATCC 700964).